The chain runs to 123 residues: Large ribosomal subunit protein bL19c (123 aa).

The protein belongs to the bacterial ribosomal protein bL19 family.

The protein resides in the plastid. It localises to the chloroplast. This chain is Large ribosomal subunit protein bL19c (rpl19), found in Porphyra purpurea (Red seaweed).